Consider the following 166-residue polypeptide: RNA polymerase sigma factor SigV (166 aa).

The Polymerase core binding motif lies at 38-51 (DIVQESIKKALSSV). The segment at residues 131–150 (LEEIAEITGENTNTVKTRLY) is a DNA-binding region (H-T-H motif).

This sequence belongs to the sigma-70 factor family. ECF subfamily. Interacts with RsiV.

Sigma factors are initiation factors that promote the attachment of RNA polymerase to specific initiation sites and are then released. Positively regulates the expression of proteins involved in stress responses against bacitracin, paraquat and tellurite. The polypeptide is RNA polymerase sigma factor SigV (sigV) (Bacillus subtilis (strain 168)).